A 1256-amino-acid polypeptide reads, in one-letter code: Pullulanase A (1256 aa).

A signal peptide spans Met1–Ser44. The disordered stretch occupies residues Ile42–Pro117. A compositionally biased stretch (low complexity) spans Thr48–Thr61. A compositionally biased stretch (polar residues) spans Asp79–Leu90. Residues Thr99–Glu111 show a composition bias toward low complexity. Substrate-binding positions include Trp141–Trp143, Trp153, Asp199, Trp248–Trp250, Trp261, Lys303, and Asn308. Residues Ser646 and Tyr648 each contribute to the Ca(2+) site. Residues Tyr652 to Asp653 and Phe728 contribute to the substrate site. Residue Asp763 is the Nucleophile of the active site. Residue Glu792 is the Proton donor of the active site. Trp794 lines the substrate pocket. Met813, Thr816, and Asp817 together coordinate Ca(2+). Positions 824, 827, and 834 each coordinate substrate. The Ca(2+) site is built by Asp867 and Asp871. Substrate is bound by residues Asn881, Lys954, and Asp974–Tyr976. Asp977 is a binding site for Ca(2+). The disordered stretch occupies residues Ser1126 to Asn1224. The segment covering Ser1134 to Asn1172 has biased composition (basic and acidic residues). Residues Ser1181–Ser1194 show a composition bias toward low complexity. The span at Gln1200 to Lys1210 shows a compositional bias: polar residues. The short motif at Leu1222 to Gly1226 is the LPXTG sorting signal element. Thr1225 is subject to Pentaglycyl murein peptidoglycan amidated threonine. The propeptide at Gly1226–Asn1256 is removed by sortase.

Belongs to the glycosyl hydrolase 13 family.

It localises to the secreted. The protein resides in the cell wall. It is found in the cell surface. It catalyses the reaction Hydrolysis of (1-&gt;6)-alpha-D-glucosidic linkages in pullulan, amylopectin and glycogen, and in the alpha- and beta-limit dextrins of amylopectin and glycogen.. Inhibited by 4-O-alpha-D-glucopyranosylmoranoline (G1M). Virulence factor. Involved in the degradation of glycogen of the mammalian host cells. Hydrolyzes the alpha-1,6-branchpoints of glycogen. Hydrolyzes pullulan. Does not hydrolyze dextran. Binds to mouse lung alveolar type II cells that are rich in glycogen stores. Is an alpha-glucan-specific carbohydrate-binding protein, which binds to amylose (pure alpha-(1,4)-linked glucose), amylopectin (alpha-(1,4)-linked glucose with alpha-(1,6) branch points), pullulan (linear polymer of mixed alpha-(1,4)- and alpha-(1,6)-linked glucose) and glycogen (similar to amylopectin with more frequent alpha-(1,6) branch points) in vitro. Does not bind to dextran (a linear polymer of alpha-(1,6)-linked glucose). The sequence is that of Pullulanase A from Streptococcus pneumoniae serotype 2 (strain D39 / NCTC 7466).